A 572-amino-acid polypeptide reads, in one-letter code: Probable cysteine--tRNA ligase, mitochondrial (572 aa).

Cysteine 81 contacts Zn(2+). Residue glycine 82 participates in L-cysteine binding. The 'HIGH' region motif lies at 83–93 (PTVYDHAHLGH). Threonine 122 lines the L-cysteine pocket. Residues 127–130 (KIIK) carry the 'KIIK' region motif. Zn(2+) contacts are provided by cysteine 260, histidine 285, and glutamate 289. Histidine 285 is an L-cysteine binding site. The short motif at 320 to 324 (KMSKS) is the 'KMSKS' region element. Lysine 323 provides a ligand contact to ATP.

It belongs to the class-I aminoacyl-tRNA synthetase family. Zn(2+) is required as a cofactor.

It is found in the mitochondrion. The catalysed reaction is tRNA(Cys) + L-cysteine + ATP = L-cysteinyl-tRNA(Cys) + AMP + diphosphate. It catalyses the reaction 2 L-cysteine = S-sulfanyl-L-cysteine + L-alanine. The enzyme catalyses S-sulfanyl-L-cysteine + L-cysteine = S-disulfanyl-L-cysteine + L-alanine. It carries out the reaction S-sulfanyl-L-cysteine + tRNA(Cys) + ATP = (S)-sulfanyl-L-cysteinyl-tRNA(Cys) + AMP + diphosphate. The catalysed reaction is S-disulfanyl-L-cysteine + tRNA(Cys) + ATP = (S)-disulfanyl-L-cysteinyl-tRNA(Cys) + AMP + diphosphate. Its function is as follows. Mitochondrial cysteine-specific aminoacyl-tRNA synthetase that catalyzes the ATP-dependent ligation of cysteine to tRNA(Cys). In terms of biological role, in addition to its role as an aminoacyl-tRNA synthetase, has also cysteine persulfide synthase activity. Produces reactive persulfide species such as cysteine persulfide (CysSSH) from substrate cysteine and mediate direct incorporation of CysSSH into proteins during translations, resulting in protein persulfides and polysulfides. CysSSHs behave as potent antioxidants and cellular protectants. In Xenopus tropicalis (Western clawed frog), this protein is Probable cysteine--tRNA ligase, mitochondrial (cars2).